We begin with the raw amino-acid sequence, 81 residues long: UPF0181 protein Spro_2806 (81 aa).

The interval glutamate 43–tyrosine 81 is disordered. Composition is skewed to acidic residues over residues phenylalanine 54–tyrosine 63 and glutamine 70–tyrosine 81.

This sequence belongs to the UPF0181 family.

The protein is UPF0181 protein Spro_2806 of Serratia proteamaculans (strain 568).